A 586-amino-acid polypeptide reads, in one-letter code: Dihydroxy-acid dehydratase 2 (586 aa).

[2Fe-2S] cluster is bound at residue Cys-68. A Mg(2+)-binding site is contributed by Asp-100. Position 141 (Cys-141) interacts with [2Fe-2S] cluster. 2 residues coordinate Mg(2+): Asp-142 and Lys-143. The residue at position 143 (Lys-143) is an N6-carboxylysine. Cys-213 contributes to the [2Fe-2S] cluster binding site. Glu-463 contacts Mg(2+). Catalysis depends on Ser-489, which acts as the Proton acceptor.

Belongs to the IlvD/Edd family. In terms of assembly, homodimer. It depends on [2Fe-2S] cluster as a cofactor. Requires Mg(2+) as cofactor.

The catalysed reaction is (2R)-2,3-dihydroxy-3-methylbutanoate = 3-methyl-2-oxobutanoate + H2O. The enzyme catalyses (2R,3R)-2,3-dihydroxy-3-methylpentanoate = (S)-3-methyl-2-oxopentanoate + H2O. The protein operates within amino-acid biosynthesis; L-isoleucine biosynthesis; L-isoleucine from 2-oxobutanoate: step 3/4. It functions in the pathway amino-acid biosynthesis; L-valine biosynthesis; L-valine from pyruvate: step 3/4. In terms of biological role, functions in the biosynthesis of branched-chain amino acids. Catalyzes the dehydration of (2R,3R)-2,3-dihydroxy-3-methylpentanoate (2,3-dihydroxy-3-methylvalerate) into 2-oxo-3-methylpentanoate (2-oxo-3-methylvalerate) and of (2R)-2,3-dihydroxy-3-methylbutanoate (2,3-dihydroxyisovalerate) into 2-oxo-3-methylbutanoate (2-oxoisovalerate), the penultimate precursor to L-isoleucine and L-valine, respectively. The protein is Dihydroxy-acid dehydratase 2 of Mesorhizobium japonicum (strain LMG 29417 / CECT 9101 / MAFF 303099) (Mesorhizobium loti (strain MAFF 303099)).